The sequence spans 299 residues: Peroxisomal biogenesis factor 19 (299 aa).

The interval 1–63 is disordered; sequence MAAAEEGCSV…SPGDTAKDAL (63 aa). The residue at position 2 (alanine 2) is an N-acetylalanine. The segment at 2–56 is docking to the peroxisome membrane and binding to PEX3; sequence AAAEEGCSVGAEADRELEELLESALDDFDKAKPSPAPPSTTTAPDASGPQKRSPG. Positions 2-91 are necessary for PEX19 function on peroxisome biogenesis; that stretch reads AAAEEGCSVG…QATAEFEKAM (90 aa). Positions 16 to 27 are enriched in acidic residues; sequence RELEELLESALD. Serine 35, serine 54, and serine 66 each carry phosphoserine. Threonine 236 carries the phosphothreonine modification. Cysteine 296 is subject to Cysteine methyl ester. Cysteine 296 is lipidated: S-farnesyl cysteine. The propeptide at 297–299 is removed in mature form; that stretch reads LIM.

It belongs to the peroxin-19 family. In terms of assembly, interacts with a broad range of peroxisomal membrane proteins, including PEX3, PEX10, PEX11A, PEX11B, PEX12, PEX13, PEX14 and PEX16, PXMP2/PMP22, PXMP4/PMP24, SLC25A17/PMP34, ABCD1/ALDP, ABCD2/ALDRP, and ABCD3/PMP70. Also interacts with the tumor suppressor CDKN2A/p19ARF. (Microbial infection) Interacts with human cytomegalovirus protein UL37 isoform vMIA; this interaction inhibits the peroxisomal-dependent antiviral signaling. Ubiquitously expressed. Isoform 1 is strongly predominant in all tissues except in utero where isoform 2 is the main form.

It localises to the cytoplasm. The protein localises to the peroxisome membrane. Its function is as follows. Necessary for early peroxisomal biogenesis. Acts both as a cytosolic chaperone and as an import receptor for peroxisomal membrane proteins (PMPs). Binds and stabilizes newly synthesized PMPs in the cytoplasm by interacting with their hydrophobic membrane-spanning domains, and targets them to the peroxisome membrane by binding to the integral membrane protein PEX3. Excludes CDKN2A from the nucleus and prevents its interaction with MDM2, which results in active degradation of TP53. This is Peroxisomal biogenesis factor 19 from Homo sapiens (Human).